A 31-amino-acid chain; its full sequence is Ice-structuring glycoprotein 3 (31 aa).

O-linked (GalNAc...) threonine glycosylation is found at Thr-3, Thr-6, Thr-9, Thr-12, Thr-15, Thr-18, Thr-21, Thr-24, Thr-27, and Thr-30.

Post-translationally, O-linked glycans consist of Gal-GalNAc disaccharides. The three proteins may differ only in the number of repeating units of -Ala-Ala-Thr-.

The protein localises to the secreted. Functionally, antifreeze proteins lower the blood freezing point. This fish lives in antarctic waters where it experiences water temperatures near -1.9 degrees Celsius. Its blood has a freezing point of about -2.0 degrees Celsius, and 30% of the freezing-point depression is due mainly to the 3 major high molecular weight glycoproteins in the plasma. This is Ice-structuring glycoprotein 3 from Pagothenia borchgrevinki (Bald rockcod).